The chain runs to 120 residues: Small ribosomal subunit protein uS17 (120 aa).

Over residues 1–22 (MMAEAKTGAKATKSAAAGAADG) the composition is skewed to low complexity. Positions 1–46 (MMAEAKTGAKATKSAAAGAADGASKEKGPKHTPSPPKPSGRRKTRI) are disordered.

Belongs to the universal ribosomal protein uS17 family. As to quaternary structure, part of the 30S ribosomal subunit.

Its function is as follows. One of the primary rRNA binding proteins, it binds specifically to the 5'-end of 16S ribosomal RNA. The sequence is that of Small ribosomal subunit protein uS17 from Mycobacterium ulcerans (strain Agy99).